Consider the following 112-residue polypeptide: Large ribosomal subunit protein eL30x (112 aa).

It belongs to the eukaryotic ribosomal protein eL30 family.

The polypeptide is Large ribosomal subunit protein eL30x (RPL30C) (Arabidopsis thaliana (Mouse-ear cress)).